The following is a 527-amino-acid chain: Outer capsid protein VP5 (527 aa).

Residues 1 to 42 form an involved in membrane permeabilization region; that stretch reads MGKFIKQLSKFGKKVGGALTSNTAKKIYKTIGDTAVRFAESD.

The protein belongs to the orbivirus VP5 family.

It localises to the virion. VP5 protein is one of the two proteins (with VP2) which constitute the virus particle outer capsid. Acts as a membrane permeabilization protein that mediates release of viral particles from endosomal compartments into the cytoplasm. Permeabilization activity is probably negatively regulated by VP2 and is triggered by endosomal degradation of VP2 and exposure to low pH. The chain is Outer capsid protein VP5 (Segment-6) from Antilocapra americana (Pronghorn).